The following is a 316-amino-acid chain: uncharacterized protein (316 aa).

The 56-residue stretch at 1–56 (MATLSDVAKKANVSKMTVSRVINHPETVTDELKKLVHSAMKELNYIPNYAARALVQ) folds into the HTH lacI-type domain. Residues 4–23 (LSDVAKKANVSKMTVSRVIN) constitute a DNA-binding region (H-T-H motif).

This is an uncharacterized protein from Bacillus subtilis (strain 168).